The chain runs to 78 residues: Apolipoprotein C-I (78 aa).

Residues 1-26 form the signal peptide; that stretch reads MRLILWLPVLVVVLLMVTEGPAPAQG.

Belongs to the apolipoprotein C1 family.

The protein resides in the secreted. Functionally, inhibitor of lipoprotein binding to the low density lipoprotein (LDL) receptor, LDL receptor-related protein, and very low density lipoprotein (VLDL) receptor. Associates with high density lipoproteins (HDL) and the triacylglycerol-rich lipoproteins in the plasma and makes up about 10% of the protein of the VLDL and 2% of that of HDL. Appears to interfere directly with fatty acid uptake and is also the major plasma inhibitor of cholesteryl ester transfer protein (CETP). Binds free fatty acids and reduces their intracellular esterification. Modulates the interaction of APOE with beta-migrating VLDL and inhibits binding of beta-VLDL to the LDL receptor-related protein. The sequence is that of Apolipoprotein C-I (APOC1) from Panthera tigris altaica (Siberian tiger).